Here is a 439-residue protein sequence, read N- to C-terminus: Lipase 1 (439 aa).

A signal peptide spans methionine 1–glycine 24. The segment at glycine 28 to isoleucine 60 is disordered. Residues glycine 29 to proline 51 show a composition bias toward acidic residues. Asparagine 124 and asparagine 151 each carry an N-linked (GlcNAc...) asparagine glycan. Serine 197 (charge relay system) is an active-site residue. Asparagine 346 and asparagine 379 each carry an N-linked (GlcNAc...) asparagine glycan. The active-site Charge relay system is histidine 393. Asparagine 426 is a glycosylation site (N-linked (GlcNAc...) asparagine).

Belongs to the AB hydrolase superfamily. Lipase family. As to expression, in 14 hours embryos expression is seen in the foregut/midgut boundary.

It localises to the secreted. Its function is as follows. Could be a digestive enzyme. The chain is Lipase 1 (Lip1) from Drosophila melanogaster (Fruit fly).